We begin with the raw amino-acid sequence, 275 residues long: 2,3,4,5-tetrahydropyridine-2,6-dicarboxylate N-succinyltransferase (275 aa).

It belongs to the transferase hexapeptide repeat family.

The protein localises to the cytoplasm. The enzyme catalyses (S)-2,3,4,5-tetrahydrodipicolinate + succinyl-CoA + H2O = (S)-2-succinylamino-6-oxoheptanedioate + CoA. It functions in the pathway amino-acid biosynthesis; L-lysine biosynthesis via DAP pathway; LL-2,6-diaminopimelate from (S)-tetrahydrodipicolinate (succinylase route): step 1/3. In Burkholderia ambifaria (strain MC40-6), this protein is 2,3,4,5-tetrahydropyridine-2,6-dicarboxylate N-succinyltransferase.